Here is a 406-residue protein sequence, read N- to C-terminus: Peptidase T (406 aa).

A Zn(2+)-binding site is contributed by His-78. The active site involves Asp-80. Asp-139 is a binding site for Zn(2+). The active-site Proton acceptor is Glu-173. 3 residues coordinate Zn(2+): Glu-174, Asp-196, and His-378.

Belongs to the peptidase M20B family. Zn(2+) serves as cofactor.

It is found in the cytoplasm. It carries out the reaction Release of the N-terminal residue from a tripeptide.. Cleaves the N-terminal amino acid of tripeptides. This is Peptidase T from Clostridium perfringens (strain ATCC 13124 / DSM 756 / JCM 1290 / NCIMB 6125 / NCTC 8237 / Type A).